The following is a 124-amino-acid chain: Small ribosomal subunit protein bS16 (124 aa).

Residues 81-90 are compositionally biased toward basic residues; that stretch reads LKKRPARNNP. A disordered region spans residues 81-124; that stretch reads LKKRPARNNPHKGEPGKKAQERIAAAKQAAEDAAAAAEADSASE. The span at 91 to 101 shows a compositional bias: basic and acidic residues; that stretch reads HKGEPGKKAQE. Over residues 102–124 the composition is skewed to low complexity; it reads RIAAAKQAAEDAAAAAEADSASE.

Belongs to the bacterial ribosomal protein bS16 family.

This chain is Small ribosomal subunit protein bS16, found in Bartonella tribocorum (strain CIP 105476 / IBS 506).